The chain runs to 119 residues: MTQFDPATLRYDVNGLIPCIAQQEGTGEVLMMAWMNADSVARTLESGRVTYWSRSRQAFWVKGETSGHVQELVDLRVDCDRDCLLAVVRQTGPACHTNRRVCFYTSVTSGEEVELMAPE.

Asp78 is a binding site for Mg(2+). Position 79 (Cys79) interacts with Zn(2+). Mg(2+) is bound by residues Asp80 and Asp82. Cys95 and Cys102 together coordinate Zn(2+).

Belongs to the PRA-CH family. As to quaternary structure, homodimer. It depends on Mg(2+) as a cofactor. Zn(2+) serves as cofactor.

It is found in the cytoplasm. It carries out the reaction 1-(5-phospho-beta-D-ribosyl)-5'-AMP + H2O = 1-(5-phospho-beta-D-ribosyl)-5-[(5-phospho-beta-D-ribosylamino)methylideneamino]imidazole-4-carboxamide. It functions in the pathway amino-acid biosynthesis; L-histidine biosynthesis; L-histidine from 5-phospho-alpha-D-ribose 1-diphosphate: step 3/9. Catalyzes the hydrolysis of the adenine ring of phosphoribosyl-AMP. In Jannaschia sp. (strain CCS1), this protein is Phosphoribosyl-AMP cyclohydrolase.